Consider the following 558-residue polypeptide: Membrane transporter D2 (558 aa).

Residues 1-28 (MTLKKRSSAPELPTSLDEDEEEDSPQPL) are disordered. The Cytoplasmic portion of the chain corresponds to 1–38 (MTLKKRSSAPELPTSLDEDEEEDSPQPLSNTPFFSMKN). Residues 39 to 59 (LIVATPIILTPLLYGYNLGFV) traverse the membrane as a helical segment. Residues 60 to 152 (GPYSTMYGYA…QVGYSSIQSG (93 aa)) are Extracellular-facing. A helical transmembrane segment spans residues 153-173 (VFAGSLVIGSTMGALMGGYLT). Over 174 to 179 (KRLDYC) the chain is Cytoplasmic. Residues 180 to 200 (KSFLFIGLLSVIGNVLTHVAT) traverse the membrane as a helical segment. At 201–204 (GLFH) the chain is on the extracellular side. The chain crosses the membrane as a helical span at residues 205–225 (YWVLFVARIVLGFPLGWQSIT). Topologically, residues 226–241 (SSHYTDKFAPANHAKT) are cytoplasmic. A helical membrane pass occupies residues 242–262 (LGTLFQVSVSTGIFVTSFFGL). At 263 to 281 (VLGNTIQYDAASNANTMGR) the chain is on the extracellular side. The helical transmembrane segment at 282–302 (MQGLVSVSTLLSIFVVFLPLI) threads the bilayer. Over 303 to 335 (TKDGYSKSRRGDYEGENSEDASRKAAEEYTMTQ) the chain is Cytoplasmic. Residues 336–356 (MIGPILNGVAMGCVTQLTGIN) traverse the membrane as a helical segment. The Extracellular segment spans residues 357–373 (ANMNFAPTIMSNLGLQP). A helical transmembrane segment spans residues 374–394 (LVGNIIVMAWNMLATFCVIPL). At 395–402 (SRRFSMRT) the chain is on the cytoplasmic side. Residues 403–423 (LFLFCGFVGSLCCVFLGGIPV) form a helical membrane-spanning segment. Residues 424–441 (YPGVTKSDKAISGIAITG) lie on the Extracellular side of the membrane. A helical transmembrane segment spans residues 442-463 (IAIFIALYEMGVGPCFYVLAVD). The Cytoplasmic portion of the chain corresponds to 464-478 (VFPESFRPIGSSITV). A helical transmembrane segment spans residues 479 to 499 (GVMFIFNLIINICYPIATEGI). The Extracellular segment spans residues 500–512 (SGGPSGNPNKGQA). The helical transmembrane segment at 513–533 (VAFIFFGCIGVVACVIEYFFL) threads the bilayer. The Cytoplasmic segment spans residues 534 to 558 (QPWVEPEAKMTDDLDGAAVPEGKHD).

This sequence belongs to the major facilitator superfamily. Sugar transporter (TC 2.A.1.1) family.

It is found in the membrane. The sequence is that of Membrane transporter D2 from Leishmania donovani.